The sequence spans 122 residues: Small ribosomal subunit protein bS6 (122 aa).

The interval 97 to 122 (TAPSPMMKAVQKEDAAKSHRAEAPAA) is disordered. Residues 106 to 122 (VQKEDAAKSHRAEAPAA) are compositionally biased toward basic and acidic residues.

Belongs to the bacterial ribosomal protein bS6 family.

In terms of biological role, binds together with bS18 to 16S ribosomal RNA. The sequence is that of Small ribosomal subunit protein bS6 from Janthinobacterium sp. (strain Marseille) (Minibacterium massiliensis).